Here is a 356-residue protein sequence, read N- to C-terminus: Vesicular integral-membrane protein VIP36 (356 aa).

The first 44 residues, 1 to 44 (MAAEGWIWRWGWGRRCLGRPGLPGPGPGPATPLFLLLLLGPVVA), serve as a signal peptide directing secretion. Residues 45 to 322 (DITDGNSEHL…FRSGPLTGWR (278 aa)) lie on the Lumenal side of the membrane. One can recognise an L-type lectin-like domain in the interval 52–276 (EHLKREHSLI…DIISMKLFQL (225 aa)). The a carbohydrate site is built by serine 96 and aspartate 131. Residues aspartate 162, tyrosine 164, and asparagine 166 each coordinate Ca(2+). 164–166 (YPN) serves as a coordination point for a carbohydrate. An N-linked (GlcNAc...) asparagine glycan is attached at asparagine 183. Histidine 190 provides a ligand contact to a carbohydrate. Aspartate 193 lines the Ca(2+) pocket. Cysteine 202 and cysteine 239 form a disulfide bridge. 260–262 (GDL) contributes to the a carbohydrate binding site. The helical transmembrane segment at 323-345 (VFLLLLCALLGIIVCAVVGAVVF) threads the bilayer. Residues 346–356 (QKRQERNKRFY) lie on the Cytoplasmic side of the membrane.

In terms of assembly, monomer. Requires Ca(2+) as cofactor. As to expression, expressed in kidney, liver, intestine, lung, spleen and heart. Low expression in brain.

Its subcellular location is the golgi apparatus membrane. Plays a role as an intracellular lectin in the early secretory pathway. Interacts with N-acetyl-D-galactosamine and high-mannose type glycans and may also bind to O-linked glycans. Involved in the transport and sorting of glycoproteins carrying high mannose-type glycans. This is Vesicular integral-membrane protein VIP36 (LMAN2) from Canis lupus familiaris (Dog).